A 153-amino-acid chain; its full sequence is Transcription antitermination protein NusB (153 aa).

It belongs to the NusB family.

In terms of biological role, involved in transcription antitermination. Required for transcription of ribosomal RNA (rRNA) genes. Binds specifically to the boxA antiterminator sequence of the ribosomal RNA (rrn) operons. The protein is Transcription antitermination protein NusB of Fusobacterium nucleatum subsp. nucleatum (strain ATCC 25586 / DSM 15643 / BCRC 10681 / CIP 101130 / JCM 8532 / KCTC 2640 / LMG 13131 / VPI 4355).